The primary structure comprises 70 residues: uncharacterized protein (70 aa).

Helical transmembrane passes span Tyr-13 to Phe-33 and Gln-39 to Ile-59.

It is found in the cell membrane. This is an uncharacterized protein from Escherichia coli O6:H1 (strain CFT073 / ATCC 700928 / UPEC).